Here is a 259-residue protein sequence, read N- to C-terminus: Putative carbamate hydrolase RutD (259 aa).

The protein belongs to the AB hydrolase superfamily. Hydrolase RutD family.

It carries out the reaction carbamate + 2 H(+) = NH4(+) + CO2. Involved in pyrimidine catabolism. May facilitate the hydrolysis of carbamate, a reaction that can also occur spontaneously. This Pseudomonas syringae pv. syringae (strain B728a) protein is Putative carbamate hydrolase RutD.